We begin with the raw amino-acid sequence, 358 residues long: Putative spore germination protein YfkT (358 aa).

A run of 10 helical transmembrane segments spans residues 10–30, 36–56, 81–101, 107–127, 143–163, 179–199, 210–230, 262–282, 297–317, and 326–346; these read LFFG…ILMI, NAWH…WLMH, IIIL…IRFF, ILFL…FVAI, IFLF…ATQI, LQSG…PLLF, IFAI…SISV, IIAA…LYIV, AMYT…FLNT, and IKPI…YLII.

Belongs to the amino acid-polyamine-organocation (APC) superfamily. Spore germination protein (SGP) (TC 2.A.3.9) family.

It localises to the cell membrane. May be involved in spore germination. In Bacillus subtilis (strain 168), this protein is Putative spore germination protein YfkT (yfkT).